The primary structure comprises 1217 residues: DNA-directed RNA polymerase subunit beta' (1217 aa).

Zn(2+) is bound by residues Cys-60, Cys-62, Cys-75, and Cys-78. The Mg(2+) site is built by Asp-449, Asp-451, and Asp-453. Zn(2+)-binding residues include Cys-821, Cys-895, Cys-902, and Cys-905.

This sequence belongs to the RNA polymerase beta' chain family. In terms of assembly, the RNAP catalytic core consists of 2 alpha, 1 beta, 1 beta' and 1 omega subunit. When a sigma factor is associated with the core the holoenzyme is formed, which can initiate transcription. Requires Mg(2+) as cofactor. It depends on Zn(2+) as a cofactor.

It catalyses the reaction RNA(n) + a ribonucleoside 5'-triphosphate = RNA(n+1) + diphosphate. Functionally, DNA-dependent RNA polymerase catalyzes the transcription of DNA into RNA using the four ribonucleoside triphosphates as substrates. In Lactobacillus acidophilus (strain ATCC 700396 / NCK56 / N2 / NCFM), this protein is DNA-directed RNA polymerase subunit beta'.